The primary structure comprises 215 residues: Kinetochore protein Spc25 (215 aa).

Positions 43 to 114 (DNLLTAMEKA…MECIHALKRA (72 aa)) form a coiled coil.

This sequence belongs to the SPC25 family. Component of the Ndc80 complex, which is composed of Ndc80, Nuf2 and Spc25.

It localises to the nucleus. The protein resides in the chromosome. The protein localises to the centromere. Its subcellular location is the kinetochore. Its function is as follows. Acts as a component of the essential kinetochore-associated Ndc80 complex, which is required for chromosome segregation and spindle checkpoint activity during meiosis and mitosis. Required for kinetochore integrity and the organization of stable microtubule binding sites in the outer plate of the kinetochore. Participates in SAC signaling that responds specifically to disruptions in spindle microtubule dynamics. The NDC80 complex synergistically enhances the affinity of the SKA1 complex for microtubules and may allow the NDC80 complex to track depolymerizing microtubules. The polypeptide is Kinetochore protein Spc25 (Drosophila ananassae (Fruit fly)).